The primary structure comprises 200 residues: Glycerol-3-phosphate acyltransferase (200 aa).

Transmembrane regions (helical) follow at residues 2–22 (IHLLLVVAAYLLGSLSFAVIV), 51–71 (TAAILTLLGDALKGWVAVVAA), 84–104 (IVLLCALAAFIGHLFPVFFGF), 113–133 (ALGILVALDPWLGLACLATWV), and 143–163 (SLSALVTAVLAPVYAGLLLGW).

It belongs to the PlsY family. As to quaternary structure, probably interacts with PlsX.

The protein resides in the cell inner membrane. It carries out the reaction an acyl phosphate + sn-glycerol 3-phosphate = a 1-acyl-sn-glycero-3-phosphate + phosphate. Its pathway is lipid metabolism; phospholipid metabolism. Its function is as follows. Catalyzes the transfer of an acyl group from acyl-phosphate (acyl-PO(4)) to glycerol-3-phosphate (G3P) to form lysophosphatidic acid (LPA). This enzyme utilizes acyl-phosphate as fatty acyl donor, but not acyl-CoA or acyl-ACP. The sequence is that of Glycerol-3-phosphate acyltransferase from Thiobacillus denitrificans (strain ATCC 25259 / T1).